We begin with the raw amino-acid sequence, 123 residues long: Ragulator complex protein LAMTOR3-B (123 aa).

It belongs to the LAMTOR3 family. As to quaternary structure, part of the Ragulator complex composed of lamtor1, lamtor2, lamtor3, lamtor4 and lamtor5. The Ragulator complex interacts with slc38a9; the probable amino acid sensor. Component of the lysosomal folliculin complex (LFC).

The protein localises to the late endosome membrane. As part of the Ragulator complex it is involved in amino acid sensing and activation of mTORC1, a signaling complex promoting cell growth in response to growth factors, energy levels, and amino acids. Activated by amino acids through a mechanism involving the lysosomal V-ATPase, the Ragulator plays a dual role for the small GTPases Rag (RagA/RRAGA, RagB/RRAGB, RagC/RRAGC and/or RagD/RRAGD): it (1) acts as a guanine nucleotide exchange factor (GEF), activating the small GTPases Rag and (2) mediates recruitment of Rag GTPases to the lysosome membrane. Activated Ragulator and Rag GTPases function as a scaffold recruiting mTORC1 to lysosomes where it is in turn activated. This Xenopus laevis (African clawed frog) protein is Ragulator complex protein LAMTOR3-B (lamtor3-b).